A 360-amino-acid chain; its full sequence is UDP-N-acetylglucosamine--N-acetylmuramyl-(pentapeptide) pyrophosphoryl-undecaprenol N-acetylglucosamine transferase (360 aa).

Residues 13-15 (TGG), Asn-125, Arg-164, Ser-191, and Gln-290 each bind UDP-N-acetyl-alpha-D-glucosamine.

Belongs to the glycosyltransferase 28 family. MurG subfamily.

It localises to the cell inner membrane. It carries out the reaction di-trans,octa-cis-undecaprenyl diphospho-N-acetyl-alpha-D-muramoyl-L-alanyl-D-glutamyl-meso-2,6-diaminopimeloyl-D-alanyl-D-alanine + UDP-N-acetyl-alpha-D-glucosamine = di-trans,octa-cis-undecaprenyl diphospho-[N-acetyl-alpha-D-glucosaminyl-(1-&gt;4)]-N-acetyl-alpha-D-muramoyl-L-alanyl-D-glutamyl-meso-2,6-diaminopimeloyl-D-alanyl-D-alanine + UDP + H(+). It functions in the pathway cell wall biogenesis; peptidoglycan biosynthesis. Cell wall formation. Catalyzes the transfer of a GlcNAc subunit on undecaprenyl-pyrophosphoryl-MurNAc-pentapeptide (lipid intermediate I) to form undecaprenyl-pyrophosphoryl-MurNAc-(pentapeptide)GlcNAc (lipid intermediate II). The chain is UDP-N-acetylglucosamine--N-acetylmuramyl-(pentapeptide) pyrophosphoryl-undecaprenol N-acetylglucosamine transferase from Hahella chejuensis (strain KCTC 2396).